Reading from the N-terminus, the 343-residue chain is Phenylalanine--tRNA ligase alpha subunit (343 aa).

E258 lines the Mg(2+) pocket.

It belongs to the class-II aminoacyl-tRNA synthetase family. Phe-tRNA synthetase alpha subunit type 1 subfamily. In terms of assembly, tetramer of two alpha and two beta subunits. It depends on Mg(2+) as a cofactor.

The protein localises to the cytoplasm. It catalyses the reaction tRNA(Phe) + L-phenylalanine + ATP = L-phenylalanyl-tRNA(Phe) + AMP + diphosphate + H(+). The sequence is that of Phenylalanine--tRNA ligase alpha subunit from Symbiobacterium thermophilum (strain DSM 24528 / JCM 14929 / IAM 14863 / T).